Consider the following 198-residue polypeptide: FMN-dependent NADH:quinone oxidoreductase (198 aa).

FMN-binding positions include Ser10, 16–18, 94–97, and 138–141; these read SQS, MYNF, and TRGG.

The protein belongs to the azoreductase type 1 family. Homodimer. FMN is required as a cofactor.

It catalyses the reaction 2 a quinone + NADH + H(+) = 2 a 1,4-benzosemiquinone + NAD(+). It carries out the reaction N,N-dimethyl-1,4-phenylenediamine + anthranilate + 2 NAD(+) = 2-(4-dimethylaminophenyl)diazenylbenzoate + 2 NADH + 2 H(+). Its function is as follows. Quinone reductase that provides resistance to thiol-specific stress caused by electrophilic quinones. Also exhibits azoreductase activity. Catalyzes the reductive cleavage of the azo bond in aromatic azo compounds to the corresponding amines. This Shewanella putrefaciens (strain CN-32 / ATCC BAA-453) protein is FMN-dependent NADH:quinone oxidoreductase.